We begin with the raw amino-acid sequence, 462 residues long: Argininosuccinate lyase (462 aa).

The protein belongs to the lyase 1 family. Argininosuccinate lyase subfamily.

The protein resides in the cytoplasm. It catalyses the reaction 2-(N(omega)-L-arginino)succinate = fumarate + L-arginine. It participates in amino-acid biosynthesis; L-arginine biosynthesis; L-arginine from L-ornithine and carbamoyl phosphate: step 3/3. In Streptococcus agalactiae serotype V (strain ATCC BAA-611 / 2603 V/R), this protein is Argininosuccinate lyase.